A 139-amino-acid polypeptide reads, in one-letter code: uncharacterized protein (139 aa).

The region spanning 5 to 114 (IFCKIINKEL…IPRFKNDGFG (110 aa)) is the HIT domain. Residues 99–103 (HTHFH) carry the Histidine triad motif motif.

This is an uncharacterized protein from Borreliella burgdorferi (strain ATCC 35210 / DSM 4680 / CIP 102532 / B31) (Borrelia burgdorferi).